Consider the following 110-residue polypeptide: MATSRFQAFLNSPIGPKTTHFWGPIANWGFVAAGLVDMQKPPEMISGNMSSAMCVYSALFMRFAWMVQPRNYLLLACHASNETVQLYQLSRWARAQGYLSSKKEEEKPSQ.

2 helical membrane passes run 20–36 (HFWG…AGLV) and 44–61 (MISG…ALFM).

The protein belongs to the mitochondrial pyruvate carrier (MPC) (TC 2.A.105) family.

The protein localises to the mitochondrion inner membrane. Functionally, mediates the uptake of pyruvate into mitochondria. This chain is Mitochondrial pyruvate carrier 1, found in Arabidopsis thaliana (Mouse-ear cress).